Here is a 121-residue protein sequence, read N- to C-terminus: Large ribosomal subunit protein uL18c (121 aa).

Belongs to the universal ribosomal protein uL18 family. As to quaternary structure, part of the 50S ribosomal subunit; contacts the 5S rRNA.

It localises to the plastid. The protein localises to the cyanelle. Binds 5S rRNA, forms part of the central protuberance of the 50S subunit. The chain is Large ribosomal subunit protein uL18c (rpl18) from Cyanophora paradoxa.